Consider the following 226-residue polypeptide: Lysosomal-associated transmembrane protein 4B (226 aa).

4 helical membrane passes run Ile26–Ala46, Met72–Gly92, Trp100–Val120, and Cys153–Ile173. The required for NEDD4 interaction stretch occupies residues Pro205 to Pro221.

The protein belongs to the LAPTM4/LAPTM5 transporter family. Homooligomer; upon reaching the lysosomes. Interacts with MCOLN1. Interacts with NEDD4; may play a role in the lysosomal sorting of LAPTM4B; enhances HGS association with NEDD4; mediates inhibition of EGFR degradation. Interacts with PIP5K1C; promotes SNX5 association with LAPTM4B; kinase activity of PIP5K1C is required; interaction is regulated by phosphatidylinositol 4,5-bisphosphate generated by PIP5K1C. Interacts with HGS; promotes HGS ubiquitination. Interacts with SNX5. Interacts with SLC3A2 and SLC7A5; recruits SLC3A2 and SLC7A5 to lysosomes to promote leucine uptake into these organelles and is required for mTORC1 activation. Interacts with LRRC32; decreases TGFB1 production in regulatory T cells. Interacts with BECN1; competes with EGFR for LAPTM4B binding; regulates EGFR activity. Interacts with EGFR; positively correlates with EGFR activation. Undergoes proteolytic cleavage following delivery to the lysosomes. In terms of processing, ubiquitinated by NEDD4. In terms of tissue distribution, strongly expressed in fetal ovary, testis, adrenal gland, liver and uterus, and weakly expressed in the spleen.

It localises to the endomembrane system. The protein resides in the late endosome membrane. The protein localises to the cell membrane. It is found in the cell projection. Its subcellular location is the lysosome membrane. It localises to the endosome membrane. The protein resides in the endosome. The protein localises to the multivesicular body membrane. It is found in the multivesicular body lumen. In terms of biological role, required for optimal lysosomal function. Blocks EGF-stimulated EGFR intraluminal sorting and degradation. Conversely by binding with the phosphatidylinositol 4,5-bisphosphate, regulates its PIP5K1C interaction, inhibits HGS ubiquitination and relieves LAPTM4B inhibition of EGFR degradation. Recruits SLC3A2 and SLC7A5 (the Leu transporter) to the lysosome, promoting entry of leucine and other essential amino acid (EAA) into the lysosome, stimulating activation of proton-transporting vacuolar (V)-ATPase protein pump (V-ATPase) and hence mTORC1 activation. Plays a role as negative regulator of TGFB1 production in regulatory T cells. Binds ceramide and facilitates its exit from late endosome in order to control cell death pathways. The sequence is that of Lysosomal-associated transmembrane protein 4B from Bos taurus (Bovine).